The sequence spans 590 residues: Hyaluronan synthase 1 (590 aa).

The Cytoplasmic segment spans residues 1–31; it reads MKDKAAATMEIPEDPGIPKNLERKRPIVWRM. A helical membrane pass occupies residues 32-52; the sequence is IYYSFAVLLLAAFTAAYVTEF. Residues 53-60 lie on the Extracellular side of the membrane; it reads QILTHEDV. The helical transmembrane segment at 61–81 threads the bilayer; it reads LFSLGLYGLVMFLHLMMQSLF. The Cytoplasmic segment spans residues 82–401; the sequence is AYLEIRRINK…YNAQWWYKHH (320 aa). Residues 402–422 form a helical membrane-spanning segment; the sequence is IWMTYESVVHFIFPFFITATV. Over 423–425 the chain is Extracellular; sequence IRL. The helical transmembrane segment at 426–446 threads the bilayer; sequence LYASTIWNVVWLLLCIQIMSV. Over 447 to 456 the chain is Cytoplasmic; it reads LKSLYACWLR. Residues 457–477 traverse the membrane as a helical segment; sequence GNPIMLLMSLYSMLYMTGLLP. Residues 478–505 lie on the Extracellular side of the membrane; it reads SKYFAMLTINKSGWGTSGRKKIVGNYMP. Residues 506–526 form a helical membrane-spanning segment; that stretch reads VLPLSIWMAVLCGGVGYSIYM. The Cytoplasmic segment spans residues 527–543; it reads DCHQDWSTPEKQKELYH. Residues 544–564 traverse the membrane as a helical segment; the sequence is LLYGCISYTLYWVLMALMYWV. Over 565–588 the chain is Extracellular; the sequence is WVKRCCRKRSQTVTLVHDIPERLV.

It belongs to the NodC/HAS family. Mg(2+) is required as a cofactor.

It is found in the membrane. It carries out the reaction [hyaluronan](n) + UDP-N-acetyl-alpha-D-glucosamine = N-acetyl-beta-D-glucosaminyl-(1-&gt;4)-[hyaluronan](n) + UDP + H(+). The enzyme catalyses N-acetyl-beta-D-glucosaminyl-(1-&gt;4)-[hyaluronan](n) + UDP-alpha-D-glucuronate = [hyaluronan](n+1) + UDP + H(+). The protein operates within glycan biosynthesis; hyaluronan biosynthesis. In terms of biological role, catalyzes the addition of GlcNAc or GlcUA monosaccharides to the nascent hyaluronan polymer. Therefore, it is essential to hyaluronan synthesis a major component of most extracellular matrices that has a structural role in tissues architectures and regulates cell adhesion, migration and differentiation. Also able to catalyze the synthesis of chito-oligosaccharide depending on the substrate. The sequence is that of Hyaluronan synthase 1 (has1) from Xenopus tropicalis (Western clawed frog).